We begin with the raw amino-acid sequence, 239 residues long: Cysteine-rich venom protein (239 aa).

A signal peptide spans 1 to 19 (MIAFLVLPILAAVLQQSSG). The SCP domain occupies 39-166 (DLHNSLRRSV…EYKYFYVCQY (128 aa)). 8 cysteine pairs are disulfide-bonded: C75/C153, C92/C167, C148/C164, C186/C193, C189/C198, C202/C234, C211/C228, and C219/C232. One can recognise a ShKT domain in the interval 202–234 (CTHEDKFTNCKDLVKQGCNNNYLKTNCPASCSC).

Belongs to the CRISP family. As to expression, expressed by the venom gland.

Its subcellular location is the secreted. Functionally, blocks contraction of smooth muscle elicited by high potassium-induced depolarization, but does not block caffeine-stimulated contraction. May target voltage-gated calcium channels in smooth muscle. The protein is Cysteine-rich venom protein of Vipera berus (Common European adder).